A 221-amino-acid chain; its full sequence is Putative 5'(3')-deoxyribonucleotidase R824 (221 aa).

2 residues coordinate Mg(2+): aspartate 16 and aspartate 18. Residue aspartate 18 is the Nucleophile of the active site. Aspartate 18, serine 103, and lysine 138 together coordinate phosphate. Aspartate 149 serves as a coordination point for Mg(2+).

It belongs to the 5'(3')-deoxyribonucleotidase family. Mg(2+) serves as cofactor.

Its function is as follows. Dephosphorylates the 5' and 2'(3')-phosphates of deoxyribonucleotides. This chain is Putative 5'(3')-deoxyribonucleotidase R824, found in Acanthamoeba polyphaga mimivirus (APMV).